A 113-amino-acid polypeptide reads, in one-letter code: Protein suex-1 (113 aa).

The first 22 residues, 1–22, serve as a signal peptide directing secretion; it reads MQSLLVFCLATIILSNFTEASA.

The polypeptide is Protein suex-1 (Caenorhabditis elegans).